The primary structure comprises 55 residues: Large ribosomal subunit protein bL33 (55 aa).

This sequence belongs to the bacterial ribosomal protein bL33 family.

This is Large ribosomal subunit protein bL33 from Methylobacterium nodulans (strain LMG 21967 / CNCM I-2342 / ORS 2060).